The sequence spans 147 residues: Prefoldin subunit alpha (147 aa).

The protein belongs to the prefoldin alpha subunit family. Heterohexamer of two alpha and four beta subunits.

The protein resides in the cytoplasm. Its function is as follows. Molecular chaperone capable of stabilizing a range of proteins. Seems to fulfill an ATP-independent, HSP70-like function in archaeal de novo protein folding. The polypeptide is Prefoldin subunit alpha (Saccharolobus islandicus (strain Y.N.15.51 / Yellowstone #2) (Sulfolobus islandicus)).